Here is a 273-residue protein sequence, read N- to C-terminus: F-actin-capping protein subunit alpha (273 aa).

This sequence belongs to the F-actin-capping protein alpha subunit family. In terms of assembly, component of the F-actin capping complex, composed of a heterodimer of an alpha and a beta subunit.

The protein resides in the cytoplasm. It is found in the cytoskeleton. It localises to the actin patch. F-actin-capping proteins bind in a Ca(2+)-independent manner to the fast growing ends of actin filaments (barbed end) thereby blocking the exchange of subunits at these ends. Unlike other capping proteins (such as gelsolin and severin), these proteins do not sever actin filaments. This Neurospora crassa (strain ATCC 24698 / 74-OR23-1A / CBS 708.71 / DSM 1257 / FGSC 987) protein is F-actin-capping protein subunit alpha (fac-1).